The chain runs to 535 residues: BAR/IMD domain-containing adapter protein 2 (535 aa).

One can recognise an IMD domain in the interval 1–250 (MSLSRSEEMH…VQLMQQMANS (250 aa)). Residues 88 to 153 (NQLEETLKSF…LRKKSQGSKN (66 aa)) adopt a coiled-coil conformation. Residues S262, S324, S326, and S337 each carry the phosphoserine modification. Positions 299–370 (VMNGVAGPDS…TLPRSSSMAA (72 aa)) are disordered. Low complexity predominate over residues 321–335 (QPKSLSPPQSQSKLS). T341 carries the post-translational modification Phosphothreonine. S347 is subject to Phosphoserine. Residues 349–368 (TPKNSYATTENKTLPRSSSM) are compositionally biased toward polar residues. Residue T361 is modified to Phosphothreonine. Phosphoserine is present on residues S367, S385, S396, and S455. Residues 375–438 (NGRMRVKAIF…PFSYTRVLDS (64 aa)) enclose the SH3 domain. Residues 445 to 477 (HMSLQQGKSSSTGNLLDKDDLALPPPDYGTSSR) form a disordered region. Residues 447-458 (SLQQGKSSSTGN) show a composition bias toward polar residues.

Homodimer. Interacts with CDC42 and RAC1 that have been activated by GTP binding. Binds DIAPH1. Interacts with ATN1, ADGRB1, SHANK1, SHANK2, SHANK3, TIAM1, WASF1 and WASF2. Interacts with ENAH after recruitment of CDC42. Interacts with EPS8. Post-translationally, phosphorylated on tyrosine residues by INSR in response to insulin treatment. Detected in liver, brain, olfactory bulb, brain cortex, caudate putamen, hypothalamus and cerebellum.

Its subcellular location is the cytoplasm. It localises to the membrane. The protein resides in the cell projection. It is found in the filopodium. The protein localises to the ruffle. Its subcellular location is the cytoskeleton. Adapter protein that links membrane-bound small G-proteins to cytoplasmic effector proteins. Necessary for CDC42-mediated reorganization of the actin cytoskeleton and for RAC1-mediated membrane ruffling. Involved in the regulation of the actin cytoskeleton by WASF family members and the Arp2/3 complex. Plays a role in neurite growth. Acts syngeristically with ENAH to promote filipodia formation. Plays a role in the reorganization of the actin cytoskeleton in response to bacterial infection. Participates in actin bundling when associated with EPS8, promoting filopodial protrusions. This chain is BAR/IMD domain-containing adapter protein 2 (Baiap2), found in Mus musculus (Mouse).